The primary structure comprises 329 residues: Type 2 lactosamine alpha-2,3-sialyltransferase (329 aa).

Over 1–4 (MKGY) the chain is Cytoplasmic. A helical; Signal-anchor for type II membrane protein membrane pass occupies residues 5-25 (LVAIFLSSIFLYYVLYCILWG). The Lumenal segment spans residues 26–329 (TNGYWFPAEE…IKKKMVINLT (304 aa)). Asparagine 129, asparagine 181, asparagine 295, and asparagine 308 each carry an N-linked (GlcNAc...) asparagine glycan.

Belongs to the glycosyltransferase 29 family.

The protein localises to the golgi apparatus membrane. It catalyses the reaction a neolactoside nLc4Cer(d18:1(4E)) + CMP-N-acetyl-beta-neuraminate = a neolactoside IV(3)-alpha-NeuAc-nLc4Cer(d18:1(4E)) + CMP + H(+). The enzyme catalyses a beta-D-galactosyl-(1-&gt;4)-N-acetyl-beta-D-glucosaminyl derivative + CMP-N-acetyl-beta-neuraminate = an N-acetyl-alpha-neuraminyl-(2-&gt;3)-beta-D-galactosyl-(1-&gt;4)-N-acetyl-beta-D-glucosaminyl derivative + CMP + H(+). It carries out the reaction a neolactoside nLc6Cer(d18:1(4E)) + CMP-N-acetyl-beta-neuraminate = a neolactoside VI(3)-alpha-NeuNAc-nLc6Cer(d18:1(4E)) + CMP + H(+). Transfers the sialyl residue from CMP-N-acetyl-beta-neuraminate to the terminal galactose residue on sugar chains of glycoproteins and glycolipids. It's alpha-2,3-sialyltransferase activity is specific toward type II glycan chains (Galbeta1-4GlcNAc) on glycoproteins and glycolipids such as neolactosides nLc4Cer and nLc6Cer, whose sialyl-products serve as precursors for the Lewis X antigen. Critically involved in the synthesis of functional selectin ligands needed for neutrophil recruitment during inflammation and lymphocyte homing to the lymph nodes. The sequence is that of Type 2 lactosamine alpha-2,3-sialyltransferase (St3gal6) from Mus musculus (Mouse).